The following is a 133-amino-acid chain: Histone H2A (133 aa).

Over residues 1–10 the composition is skewed to gly residues; that stretch reads MTGGKSGGKA. The disordered stretch occupies residues 1–24; it reads MTGGKSGGKASGSKNAQSRSSKAG. An N6-acetyllysine mark is found at Lys5 and Lys9. Position 106 is an N5-methylglutamine (Gln106). Ser130 carries the phosphoserine modification. Residues 130 to 131 carry the [ST]-Q motif motif; the sequence is SQ.

Belongs to the histone H2A family. As to quaternary structure, the nucleosome is a histone octamer containing two molecules each of H2A, H2B, H3 and H4 assembled in one H3-H4 heterotetramer and two H2A-H2B heterodimers. The octamer wraps approximately 147 bp of DNA. Post-translationally, phosphorylated to form H2AS128ph (gamma-H2A) in response to DNA double-strand breaks (DSBs) generated by exogenous genotoxic agents and by stalled replication forks. Phosphorylation is dependent on the DNA damage checkpoint kinases mec1/ATR and tel1/ATM, spreads on either side of a detected DSB site and may mark the surrounding chromatin for recruitment of proteins required for DNA damage signaling and repair. Gamma-H2A is removed from the DNA prior to the strand invasion-primer extension step of the repair process and subsequently dephosphorylated. Dephosphorylation is necessary for efficient recovery from the DNA damage checkpoint. In terms of processing, acetylated by esa1 to form H2AK4ac and H2AK7ac.

The protein localises to the nucleus. The protein resides in the chromosome. Functionally, core component of nucleosome which plays a central role in DNA double strand break (DSB) repair. Nucleosomes wrap and compact DNA into chromatin, limiting DNA accessibility to the cellular machineries which require DNA as a template. Histones thereby play a central role in transcription regulation, DNA repair, DNA replication and chromosomal stability. DNA accessibility is regulated via a complex set of post-translational modifications of histones, also called histone code, and nucleosome remodeling. This chain is Histone H2A (hta1), found in Aspergillus clavatus (strain ATCC 1007 / CBS 513.65 / DSM 816 / NCTC 3887 / NRRL 1 / QM 1276 / 107).